Consider the following 141-residue polypeptide: Large ribosomal subunit protein uL11 (141 aa).

This sequence belongs to the universal ribosomal protein uL11 family. In terms of assembly, part of the ribosomal stalk of the 50S ribosomal subunit. Interacts with L10 and the large rRNA to form the base of the stalk. L10 forms an elongated spine to which L12 dimers bind in a sequential fashion forming a multimeric L10(L12)X complex. In terms of processing, one or more lysine residues are methylated.

Forms part of the ribosomal stalk which helps the ribosome interact with GTP-bound translation factors. The protein is Large ribosomal subunit protein uL11 of Ruminiclostridium cellulolyticum (strain ATCC 35319 / DSM 5812 / JCM 6584 / H10) (Clostridium cellulolyticum).